Reading from the N-terminus, the 279-residue chain is MLIQLCLTLFFLGCSIAGTPAPGPEDVLMGIVGGHSAPQGKWPWQVSLRIYRYYWAFWVHNCGGSIIHPQWVLTAAHCIRERDADPSVFRIRVGEAYLYGGKELLSVSRVIIHPDFVHAGLGSDVALLQLAVSVQSFPNVKPVKLPSESLEVTKKDVCWVTGWGAVSTHRSLPPPYRLQQVQVKIIDNSLCEEMYHNATRHRNRGQKLILKDMLCAGNQGQDSCYGDSGGPLVCNVTGSWTLVGVVSWGYGCALRDFPGVYARVQSFLPWITQQMQRFS.

Residues 1–17 (MLIQLCLTLFFLGCSIA) form the signal peptide. The Peptidase S1 domain maps to 31 to 276 (IVGGHSAPQG…FLPWITQQMQ (246 aa)). The cysteines at positions 62 and 78 are disulfide-linked. Catalysis depends on charge relay system residues histidine 77 and aspartate 124. Cystine bridges form between cysteine 158-cysteine 234, cysteine 191-cysteine 215, and cysteine 224-cysteine 252. N-linked (GlcNAc...) asparagine glycosylation occurs at asparagine 197. The active-site Charge relay system is the serine 228. Asparagine 235 carries an N-linked (GlcNAc...) asparagine glycan.

It belongs to the peptidase S1 family. As to quaternary structure, homooligomer, heterodimer and heterotetramer. Able to form homo- and hetero- tetrameric structures. Heterotetramer is far more stable than the homotetramer. In terms of tissue distribution, expressed in embryos and placenta. Found in uterus especially in glandular epithelium during zona lysis and implantation.

It is found in the secreted. Functionally, involved in embryo hatching and implantation. This Mus musculus (Mouse) protein is Serine protease 29 (Prss29).